The primary structure comprises 246 residues: MACLWSFSWPSCFLSLLLLLLQLSCSYAGQFRVIGPGYPIRALVGDEAELPCRISPGKNATGMEVGWYRSPFSRVVHLYRNGKDQDAEQAPEYRGRTELLKETISEGKVTLRIQNVRFSDEGGYTCFFRDHSYQEEAAMELKVEDPFYWVNPGVLTLIALVPTILLQVPVGLVFLFLQHRLRGKLRAEVENLHRTFDPHFLRVPCWKITLFVIVPVLGPLVALIICYNWLHRRLAGQFLEELRNPF.

Residues 1-28 (MACLWSFSWPSCFLSLLLLLLQLSCSYA) form the signal peptide. Residues 29-156 (GQFRVIGPGY…FYWVNPGVLT (128 aa)) lie on the Extracellular side of the membrane. Residues 31–144 (FRVIGPGYPI…EEAAMELKVE (114 aa)) form the Ig-like V-type domain. A disulfide bond links Cys-52 and Cys-126. An N-linked (GlcNAc...) asparagine glycan is attached at Asn-59. The helical transmembrane segment at 157 to 177 (LIALVPTILLQVPVGLVFLFL) threads the bilayer. The Cytoplasmic portion of the chain corresponds to 178–209 (QHRLRGKLRAEVENLHRTFDPHFLRVPCWKIT). The helical transmembrane segment at 210–230 (LFVIVPVLGPLVALIICYNWL) threads the bilayer. Residues 231–246 (HRRLAGQFLEELRNPF) are Extracellular-facing.

Belongs to the immunoglobulin superfamily. BTN/MOG family. Homodimer. As to expression, found exclusively in the CNS, where it is localized on the surface of myelin and oligodendrocyte cytoplasmic membranes. Reduced expression levels are observed in jimpy and quacking dysmyelinating mutant mice.

It localises to the membrane. Functionally, minor component of the myelin sheath. May be involved in completion and/or maintenance of the myelin sheath and in cell-cell communication. Mediates homophilic cell-cell adhesion. The sequence is that of Myelin-oligodendrocyte glycoprotein (Mog) from Mus musculus (Mouse).